The following is a 129-amino-acid chain: Cytochrome c oxidase subunit 5B, mitochondrial (129 aa).

The N-terminal 31 residues, 1–31 (MASRLLRGAGTLAAQALRARGPSGAAAMRSM), are a transit peptide targeting the mitochondrion. N6-acetyllysine is present on residues Lys-68 and Lys-86. The Zn(2+) site is built by Cys-91, Cys-93, Cys-113, and Cys-116. Lys-121 is subject to N6-acetyllysine.

This sequence belongs to the cytochrome c oxidase subunit 5B family. As to quaternary structure, component of the cytochrome c oxidase (complex IV, CIV), a multisubunit enzyme composed of 14 subunits. The complex is composed of a catalytic core of 3 subunits MT-CO1, MT-CO2 and MT-CO3, encoded in the mitochondrial DNA, and 11 supernumerary subunits COX4I1 (or COX4I2), COX5A, COX5B, COX6A1 (or COX6A2), COX6B1 (or COX6B2), COX6C, COX7A2 (or COX7A1), COX7B, COX7C, COX8A and NDUFA4, which are encoded in the nuclear genome. The complex exists as a monomer or a dimer and forms supercomplexes (SCs) in the inner mitochondrial membrane with NADH-ubiquinone oxidoreductase (complex I, CI) and ubiquinol-cytochrome c oxidoreductase (cytochrome b-c1 complex, complex III, CIII), resulting in different assemblies (supercomplex SCI(1)III(2)IV(1) and megacomplex MCI(2)III(2)IV(2)).

It localises to the mitochondrion inner membrane. Its pathway is energy metabolism; oxidative phosphorylation. Component of the cytochrome c oxidase, the last enzyme in the mitochondrial electron transport chain which drives oxidative phosphorylation. The respiratory chain contains 3 multisubunit complexes succinate dehydrogenase (complex II, CII), ubiquinol-cytochrome c oxidoreductase (cytochrome b-c1 complex, complex III, CIII) and cytochrome c oxidase (complex IV, CIV), that cooperate to transfer electrons derived from NADH and succinate to molecular oxygen, creating an electrochemical gradient over the inner membrane that drives transmembrane transport and the ATP synthase. Cytochrome c oxidase is the component of the respiratory chain that catalyzes the reduction of oxygen to water. Electrons originating from reduced cytochrome c in the intermembrane space (IMS) are transferred via the dinuclear copper A center (CU(A)) of subunit 2 and heme A of subunit 1 to the active site in subunit 1, a binuclear center (BNC) formed by heme A3 and copper B (CU(B)). The BNC reduces molecular oxygen to 2 water molecules using 4 electrons from cytochrome c in the IMS and 4 protons from the mitochondrial matrix. This is Cytochrome c oxidase subunit 5B, mitochondrial (COX5B) from Homo sapiens (Human).